A 222-amino-acid polypeptide reads, in one-letter code: Octanoyltransferase (222 aa).

Positions 32-207 (RDRPDVLMLL…AFARVFGVQC (176 aa)) constitute a BPL/LPL catalytic domain. Residues 72–79 (RGGEVTYH), 139–141 (ALG), and 152–154 (GFA) contribute to the substrate site. Cys-170 functions as the Acyl-thioester intermediate in the catalytic mechanism.

It belongs to the LipB family.

It is found in the cytoplasm. It carries out the reaction octanoyl-[ACP] + L-lysyl-[protein] = N(6)-octanoyl-L-lysyl-[protein] + holo-[ACP] + H(+). Its pathway is protein modification; protein lipoylation via endogenous pathway; protein N(6)-(lipoyl)lysine from octanoyl-[acyl-carrier-protein]: step 1/2. Functionally, catalyzes the transfer of endogenously produced octanoic acid from octanoyl-acyl-carrier-protein onto the lipoyl domains of lipoate-dependent enzymes. Lipoyl-ACP can also act as a substrate although octanoyl-ACP is likely to be the physiological substrate. This Gloeobacter violaceus (strain ATCC 29082 / PCC 7421) protein is Octanoyltransferase.